The sequence spans 267 residues: Phosphonoacetaldehyde hydrolase (267 aa).

Aspartate 10 functions as the Nucleophile in the catalytic mechanism. Mg(2+) is bound by residues aspartate 10 and alanine 12. Lysine 51 functions as the Schiff-base intermediate with substrate in the catalytic mechanism. Aspartate 184 lines the Mg(2+) pocket.

The protein belongs to the HAD-like hydrolase superfamily. PhnX family. As to quaternary structure, homodimer. It depends on Mg(2+) as a cofactor.

The enzyme catalyses phosphonoacetaldehyde + H2O = acetaldehyde + phosphate + H(+). Involved in phosphonate degradation. This Paraburkholderia phytofirmans (strain DSM 17436 / LMG 22146 / PsJN) (Burkholderia phytofirmans) protein is Phosphonoacetaldehyde hydrolase.